The sequence spans 146 residues: Large ribosomal subunit protein uL15 (146 aa).

The interval 1 to 56 (MGLRLNELSPGVGAKKTAQRRGRGIGSGLGKTGGRGVKGQKSRSGSSVRSGFEGGQ) is disordered. Residues 24–37 (GIGSGLGKTGGRGV) show a composition bias toward gly residues.

Belongs to the universal ribosomal protein uL15 family. Part of the 50S ribosomal subunit.

Functionally, binds to the 23S rRNA. This is Large ribosomal subunit protein uL15 from Psychrobacter arcticus (strain DSM 17307 / VKM B-2377 / 273-4).